Reading from the N-terminus, the 189-residue chain is 3-hydroxyanthranilate 3,4-dioxygenase (189 aa).

Position 46 (Arg-46) interacts with O2. Residues His-50, Glu-56, and His-94 each contribute to the Fe cation site. Glu-56 provides a ligand contact to substrate. Residues Arg-98 and Glu-109 each contribute to the substrate site. The Fe cation site is built by Cys-124, Cys-127, Cys-161, and Cys-164.

This sequence belongs to the 3-HAO family. As to quaternary structure, homodimer. Fe(2+) serves as cofactor.

It catalyses the reaction 3-hydroxyanthranilate + O2 = (2Z,4Z)-2-amino-3-carboxymuconate 6-semialdehyde. It functions in the pathway cofactor biosynthesis; NAD(+) biosynthesis; quinolinate from L-kynurenine: step 3/3. Its function is as follows. Catalyzes the oxidative ring opening of 3-hydroxyanthranilate to 2-amino-3-carboxymuconate semialdehyde, which spontaneously cyclizes to quinolinate. This is 3-hydroxyanthranilate 3,4-dioxygenase from Shewanella woodyi (strain ATCC 51908 / MS32).